A 377-amino-acid chain; its full sequence is 5-hydroxytryptamine receptor 1D (377 aa).

Residues 1 to 23 (MSPLNQSAEGLPQEASNRSLNAT) form a disordered region. Residues 1–38 (MSPLNQSAEGLPQEASNRSLNATETSEAWDPRTLQALK) are Extracellular-facing. N-linked (GlcNAc...) asparagine glycans are attached at residues N5, N17, and N21. The helical transmembrane segment at 39-64 (ISLAVVLSVITLATVLSNAFVLTTIL) threads the bilayer. At 65–75 (LTRKLHTPANY) the chain is on the cytoplasmic side. Residues 76–97 (LIGSLATTDLLVSILVMPISIA) traverse the membrane as a helical segment. The Extracellular portion of the chain corresponds to 98 to 109 (YTITHTWNFGQI). Residues 110–134 (LCDIWLSSDITCCTASILHLCVIAL) traverse the membrane as a helical segment. A disulfide bond links C111 and C188. Residues D118 and C122 each contribute to the serotonin site. Residues 135–137 (DRY) carry the DRY motif; important for ligand-induced conformation changes motif. Residues 135–154 (DRYWAITDALEYSKRRTAGH) lie on the Cytoplasmic side of the membrane. A helical membrane pass occupies residues 155-176 (AATMIAIVWAISICISIPPLFW). Over 177–194 (RQAKAQEEMSDCLVNTSQ) the chain is Extracellular. A helical membrane pass occupies residues 195 to 218 (ISYTIYSTCGAFYIPSVLLIILYG). The Cytoplasmic segment spans residues 219-300 (RIYRAARNRI…ISAARERKAT (82 aa)). Residues 301 to 326 (KILGIILGAFIICWLPFFVVSLVLPI) form a helical membrane-spanning segment. S321 lines the serotonin pocket. The Extracellular portion of the chain corresponds to 327-335 (CRDSCWIHP). A helical transmembrane segment spans residues 336 to 359 (ALFDFFTWLGYLNSLINPIIYTVF). An NPxxY motif; important for ligand-induced conformation changes and signaling motif is present at residues 352–356 (NPIIY). At 360-377 (NEEFRQAFQKIVPFRKAS) the chain is on the cytoplasmic side.

It belongs to the G-protein coupled receptor 1 family. In terms of assembly, homodimer. Heterodimer with HTR1B. In terms of tissue distribution, detected in brain neocortex and caudate nucleus (at protein level).

Its subcellular location is the cell membrane. G-protein coupled receptor for 5-hydroxytryptamine (serotonin). Also functions as a receptor for ergot alkaloid derivatives, various anxiolytic and antidepressant drugs and other psychoactive substances. Ligand binding causes a conformation change that triggers signaling via guanine nucleotide-binding proteins (G proteins) and modulates the activity of downstream effectors, such as adenylate cyclase. HTR1D is coupled to G(i)/G(o) G alpha proteins and mediates inhibitory neurotransmission by inhibiting adenylate cyclase activity. Regulates the release of 5-hydroxytryptamine in the brain, and thereby affects neural activity. May also play a role in regulating the release of other neurotransmitters. May play a role in vasoconstriction. This Homo sapiens (Human) protein is 5-hydroxytryptamine receptor 1D.